Here is a 130-residue protein sequence, read N- to C-terminus: Small ribosomal subunit protein uS9 (130 aa).

The tract at residues 108–130 (SREVERKKVGLRKARKRPQYSKR) is disordered. Positions 116–130 (VGLRKARKRPQYSKR) are enriched in basic residues.

This sequence belongs to the universal ribosomal protein uS9 family.

The polypeptide is Small ribosomal subunit protein uS9 (Cellvibrio japonicus (strain Ueda107) (Pseudomonas fluorescens subsp. cellulosa)).